Here is a 354-residue protein sequence, read N- to C-terminus: Histidinol-phosphate aminotransferase (354 aa).

Positions 1 to 11 are enriched in basic and acidic residues; sequence MKSFLSDKAKS. The disordered stretch occupies residues 1–33; the sequence is MKSFLSDKAKSIEPYTPGEQPKDKNYIKLNTNE. Lys-211 carries the post-translational modification N6-(pyridoxal phosphate)lysine.

Belongs to the class-II pyridoxal-phosphate-dependent aminotransferase family. Histidinol-phosphate aminotransferase subfamily. As to quaternary structure, homodimer. Pyridoxal 5'-phosphate is required as a cofactor.

The enzyme catalyses L-histidinol phosphate + 2-oxoglutarate = 3-(imidazol-4-yl)-2-oxopropyl phosphate + L-glutamate. The protein operates within amino-acid biosynthesis; L-histidine biosynthesis; L-histidine from 5-phospho-alpha-D-ribose 1-diphosphate: step 7/9. In Brachyspira hyodysenteriae (strain ATCC 49526 / WA1), this protein is Histidinol-phosphate aminotransferase.